The chain runs to 458 residues: MTKEVKQLFGTDGVRGKANYEPMTVELSVLLGKAVAGVLQESKSGKHRVVVGKDTRLSGYMFENALVAGLTSMGIETLVLGPIPTPGVAFITRAYRADAGIMISASHNPYWDNGIKIFSSEGFKISDVIERRIEQMVALKEFGNFPDDCAVGKNKRVVDAMGRYIEFAKATFPRGRTLKGLKIVLDCAHGAAYKVAPSVFEELDAEVICYGCEPTGSNINDNCGALFPSVIQKAVIEHKADVGIALDGDGDRVIMVDEKGHIVDGDMILSICANDLKKKDLLRGNRVIATVMTNFGVLKYLESVGIEALISPVGDRHVLQNMLEYEVNLGGEQSGHMIFLDYNTTGDGIVSALQVLRIMIESESTLSDLTSLIVKSPQALINVAVKEKIPLDTLPLVQEALRDVRSSLGDSGRVLLRYSGTENICRVMVEGLKKHQVDSLAKTIADIVDSELGVGMVE.

The Phosphoserine intermediate role is filled by serine 106. 4 residues coordinate Mg(2+): serine 106, aspartate 247, aspartate 249, and aspartate 251. Serine 106 is modified (phosphoserine).

The protein belongs to the phosphohexose mutase family. It depends on Mg(2+) as a cofactor. In terms of processing, activated by phosphorylation.

It catalyses the reaction alpha-D-glucosamine 1-phosphate = D-glucosamine 6-phosphate. Its function is as follows. Catalyzes the conversion of glucosamine-6-phosphate to glucosamine-1-phosphate. The chain is Phosphoglucosamine mutase from Chlamydia abortus (strain DSM 27085 / S26/3) (Chlamydophila abortus).